Reading from the N-terminus, the 545-residue chain is Membrane protein insertase YidC (545 aa).

The next 4 membrane-spanning stretches (helical) occupy residues 350–370 (IIGNWGWAIIVLTIIVKAVLY), 424–444 (LPMLLQIPVFIGLYWALFASV), 461–481 (ADPYYILPIIMAATMFAQTYL), and 498–518 (PLVFSVMFFFFPAGLVLYWVV).

It belongs to the OXA1/ALB3/YidC family. Type 1 subfamily. As to quaternary structure, interacts with the Sec translocase complex via SecD. Specifically interacts with transmembrane segments of nascent integral membrane proteins during membrane integration.

It is found in the cell inner membrane. Required for the insertion and/or proper folding and/or complex formation of integral membrane proteins into the membrane. Involved in integration of membrane proteins that insert both dependently and independently of the Sec translocase complex, as well as at least some lipoproteins. Aids folding of multispanning membrane proteins. In Neisseria meningitidis serogroup B (strain ATCC BAA-335 / MC58), this protein is Membrane protein insertase YidC.